A 381-amino-acid chain; its full sequence is Endolytic peptidoglycan transglycosylase RlpA (381 aa).

Positions 1–19 (MRKQLPVICVAAGIVLLAA) are cleaved as a signal peptide. A lipid anchor (N-palmitoyl cysteine) is attached at Cys20. A lipid anchor (S-diacylglycerol cysteine) is attached at Cys20. Residues 196–274 (LPPRPDLSGG…QPAPVSAPVA (79 aa)) are disordered. The span at 208–218 (SASSAPAQPQG) shows a compositional bias: low complexity. One can recognise an SPOR domain in the interval 304-380 (AAASGRFVVQ…AQLQSFIASA (77 aa)).

The protein belongs to the RlpA family.

It is found in the cell membrane. In terms of biological role, lytic transglycosylase with a strong preference for naked glycan strands that lack stem peptides. This Salmonella typhimurium (strain LT2 / SGSC1412 / ATCC 700720) protein is Endolytic peptidoglycan transglycosylase RlpA.